Consider the following 622-residue polypeptide: E3 ubiquitin-protein ligase RNF12-A (622 aa).

3 disordered regions span residues 1 to 26 (MESA…MDRL), 67 to 386 (RLQQ…ESER), and 473 to 514 (NANA…NSRG). Low complexity predominate over residues 11–21 (SIEQSESQRQS). Polar residues-rich tracts occupy residues 110–138 (SVRQ…NPNS) and 147–163 (INVN…SLDQ). Over residues 216-242 (RSPDQRRTRARTDRSRSPLHHAVDPPI) the composition is skewed to basic and acidic residues. A compositionally biased stretch (polar residues) spans 247-256 (HSSSQTVDTS). Low complexity predominate over residues 272-289 (SSQVQNSSSSNETEGSSR). A compositionally biased stretch (polar residues) spans 300–317 (VLGTEGQSQSTVHLSNPE). The segment covering 318 to 331 (TRSSSQTPQTDSST) has biased composition (low complexity). A compositionally biased stretch (polar residues) spans 332–341 (NAETTGTGQR). Residues 355 to 365 (RPGDYRQRDSI) are compositionally biased toward basic and acidic residues. Over residues 366-382 (ANRTRSRSQTPNNTVTY) the composition is skewed to polar residues. Residues 568–609 (CSVCITEYTEGNKLRKLPCSHEYHIHCIDRWLSENSTCPICR) form an RING-type; atypical zinc finger. Positions 619 to 622 (ESIV) match the PDZ-binding motif.

Belongs to the RNF12 family. As to quaternary structure, forms homodimers through the C-terminal region. The N-terminus interacts with the homeobox of LIM/homeobox factor lhx1/lim1, with lhx3/lim3 and lhx5/lim5, and with the N-terminus of ldb1. In terms of tissue distribution, shows overlapping expression with lhx1/lim1 and ldb1 in the gastrula mesoderm, and expression overlaps with ldb1 throughout early embryogenesis. After gastrulation, expression is gradually restricted to tissues originated from the ectoderm, the neuroectoderm, neural crest and epidermis, and subsequently to the neural tube as well as the head and tailbud region.

It localises to the nucleus. It catalyses the reaction S-ubiquitinyl-[E2 ubiquitin-conjugating enzyme]-L-cysteine + [acceptor protein]-L-lysine = [E2 ubiquitin-conjugating enzyme]-L-cysteine + N(6)-ubiquitinyl-[acceptor protein]-L-lysine.. The protein operates within protein modification; protein ubiquitination. Acts as an E3 ubiquitin-protein ligase specific for ldb1, mediating ubiquitination and proteasome-dependent degradation of excess ldb1 in a RING-dependent manner. Does not degrade ldb1 bound to lhx1/lim1, nor lim1 itself and thus contributes to the establishment of proper ldb1-lhx1/lim1 stoichiometry and the formation of a ldb1-lhx1/lim1 complex. Interferes with Spemann organizer function and suppresses secondary axis formation induced by ldb1 and lhx1/lim1. The sequence is that of E3 ubiquitin-protein ligase RNF12-A (rnf12-a) from Xenopus laevis (African clawed frog).